A 201-amino-acid chain; its full sequence is Increased recombination centers protein 21 (201 aa).

The region spanning 122 to 200 (PLRINRKIVK…LQVCFIGVVC (79 aa)) is the Cytochrome b5 heme-binding domain. The heme site is built by His-158 and His-182.

Belongs to the cytochrome b5 family.

In terms of biological role, involved in resistance to carboplatin and cisplatin. Is probably involved in a pathway contributing to genomic integrity. This chain is Increased recombination centers protein 21 (IRC21), found in Saccharomyces cerevisiae (strain ATCC 204508 / S288c) (Baker's yeast).